The sequence spans 181 residues: Organelle RRM domain-containing protein 6, chloroplastic (181 aa).

The N-terminal 44 residues, 1-44 (MAISLGRVVVPSCTISGDRLFIPNFSAICSVSCGRINVGTGVIS), are a transit peptide targeting the chloroplast. One can recognise an RRM domain in the interval 77-155 (TKLYVSGLSF…RVIFVEEAKT (79 aa)). Residues 155–169 (TRSDMSRAKPRRDFP) are compositionally biased toward basic and acidic residues. The disordered stretch occupies residues 155–181 (TRSDMSRAKPRRDFPKPQSKPRTFRTW).

As to quaternary structure, interacts with MORF8/RIP1, MORF2/RIP2, MORF9/RIP9 and VAR3/OZ1.

It localises to the plastid. It is found in the chloroplast. Its function is as follows. Involved in C-to-U editing of chloroplastic RNA. Required for the photosynthetic subunit psbF transcript editing in chloroplast. The sequence is that of Organelle RRM domain-containing protein 6, chloroplastic from Arabidopsis thaliana (Mouse-ear cress).